The primary structure comprises 459 residues: Xylose/arabinose-binding protein XacG (459 aa).

Residues 19–36 (ALTVGAAAGIAGCTGGGG) traverse the membrane as a helical segment. The disordered stretch occupies residues 27 to 68 (GIAGCTGGGGTETESTESGNGNGSGGSTDDTETSGSSSGESW).

The protein belongs to the bacterial solute-binding protein 1 family. As to quaternary structure, the complex is composed of two ATP-binding proteins (XacJ and XacK), two transmembrane proteins (XacH and XacI) and a solute-binding protein (XacG).

It localises to the cell membrane. Its function is as follows. Part of the ABC transporter complex XacGHIJK involved in the uptake of xylose and arabinose. The polypeptide is Xylose/arabinose-binding protein XacG (Haloferax volcanii (strain ATCC 29605 / DSM 3757 / JCM 8879 / NBRC 14742 / NCIMB 2012 / VKM B-1768 / DS2) (Halobacterium volcanii)).